The primary structure comprises 418 residues: Light-independent protochlorophyllide reductase subunit N (418 aa).

The [4Fe-4S] cluster site is built by cysteine 17, cysteine 42, and cysteine 103.

The protein belongs to the BchN/ChlN family. As to quaternary structure, protochlorophyllide reductase is composed of three subunits; ChlL, ChlN and ChlB. Forms a heterotetramer of two ChlB and two ChlN subunits. Requires [4Fe-4S] cluster as cofactor.

The catalysed reaction is chlorophyllide a + oxidized 2[4Fe-4S]-[ferredoxin] + 2 ADP + 2 phosphate = protochlorophyllide a + reduced 2[4Fe-4S]-[ferredoxin] + 2 ATP + 2 H2O. The protein operates within porphyrin-containing compound metabolism; chlorophyll biosynthesis (light-independent). In terms of biological role, component of the dark-operative protochlorophyllide reductase (DPOR) that uses Mg-ATP and reduced ferredoxin to reduce ring D of protochlorophyllide (Pchlide) to form chlorophyllide a (Chlide). This reaction is light-independent. The NB-protein (ChlN-ChlB) is the catalytic component of the complex. This chain is Light-independent protochlorophyllide reductase subunit N, found in Prochlorococcus marinus (strain MIT 9313).